We begin with the raw amino-acid sequence, 346 residues long: tRNA N6-adenosine threonylcarbamoyltransferase (346 aa).

Residues His110 and His114 each coordinate Fe cation. Substrate is bound by residues 132–136, Asp165, Gly178, and Asn274; that span reads LLSGG. Asp298 contacts Fe cation.

The protein belongs to the KAE1 / TsaD family. Requires Fe(2+) as cofactor.

Its subcellular location is the cytoplasm. The enzyme catalyses L-threonylcarbamoyladenylate + adenosine(37) in tRNA = N(6)-L-threonylcarbamoyladenosine(37) in tRNA + AMP + H(+). Required for the formation of a threonylcarbamoyl group on adenosine at position 37 (t(6)A37) in tRNAs that read codons beginning with adenine. Is involved in the transfer of the threonylcarbamoyl moiety of threonylcarbamoyl-AMP (TC-AMP) to the N6 group of A37, together with TsaE and TsaB. TsaD likely plays a direct catalytic role in this reaction. The sequence is that of tRNA N6-adenosine threonylcarbamoyltransferase from Borreliella afzelii (strain PKo) (Borrelia afzelii).